A 244-amino-acid polypeptide reads, in one-letter code: Protein IN2-1 homolog B (244 aa).

The segment at 1-27 is disordered; sequence MAAAAAAPASSEKEVLPPSLTSSSEPP. Residues 32 to 113 form the GST N-terminal domain; the sequence is GTTRLYVAYH…YIDTNFEGPA (82 aa). Residues Val-85 and 97-98 each bind glutathione; that span reads ES. The 124-residue stretch at 118–241 folds into the GST C-terminal domain; it reads DSEKQQFAEE…FLLEHTKKRL (124 aa).

The protein is Protein IN2-1 homolog B (GSTZ5) of Oryza sativa subsp. indica (Rice).